Reading from the N-terminus, the 525-residue chain is EGF domain-specific O-linked N-acetylglucosamine transferase (525 aa).

Positions 1-24 (MVPLRLVLLLHIIHFSCENEVGSA) are cleaved as a signal peptide. The Required for optimal activity signature appears at 293 to 295 (DYE). Asn352 carries N-linked (GlcNAc...) asparagine glycosylation. The short motif at 522–525 (RDEL) is the Prevents secretion from ER element.

It belongs to the glycosyltransferase 61 family.

It is found in the endoplasmic reticulum lumen. The catalysed reaction is L-seryl-[protein] + UDP-N-acetyl-alpha-D-glucosamine = 3-O-(N-acetyl-beta-D-glucosaminyl)-L-seryl-[protein] + UDP + H(+). It catalyses the reaction L-threonyl-[protein] + UDP-N-acetyl-alpha-D-glucosamine = 3-O-(N-acetyl-beta-D-glucosaminyl)-L-threonyl-[protein] + UDP + H(+). Functionally, catalyzes the transfer of a single N-acetylglucosamine from UDP-GlcNAc to a serine or threonine residue in extracellular proteins resulting in their modification with a beta-linked N-acetylglucosamine (O-GlcNAc). Specifically glycosylates the Thr residue located between the fifth and sixth conserved cysteines of folded EGF-like domains. The sequence is that of EGF domain-specific O-linked N-acetylglucosamine transferase (eogt) from Xenopus laevis (African clawed frog).